We begin with the raw amino-acid sequence, 424 residues long: Glutamate-1-semialdehyde 2,1-aminomutase (424 aa).

N6-(pyridoxal phosphate)lysine is present on K263.

It belongs to the class-III pyridoxal-phosphate-dependent aminotransferase family. HemL subfamily. In terms of assembly, homodimer. It depends on pyridoxal 5'-phosphate as a cofactor.

It is found in the cytoplasm. The enzyme catalyses (S)-4-amino-5-oxopentanoate = 5-aminolevulinate. It functions in the pathway porphyrin-containing compound metabolism; protoporphyrin-IX biosynthesis; 5-aminolevulinate from L-glutamyl-tRNA(Glu): step 2/2. The sequence is that of Glutamate-1-semialdehyde 2,1-aminomutase from Campylobacter jejuni subsp. doylei (strain ATCC BAA-1458 / RM4099 / 269.97).